A 173-amino-acid polypeptide reads, in one-letter code: MPNKRNVELLATLKENLERAQGSFFLVNYQGLPAKETHALRQALKQNGARLFVAKNTLIRLALKELGLPELDGLQGPSAVVFYEDPVAAAKTLVQFAKSNPKGIPQVKSGLLQGQILTAKDVEALAELPTMDELRAELVGVLQAPMAELVGVLGGVARELVGILEAYAEKKAA.

This sequence belongs to the universal ribosomal protein uL10 family. In terms of assembly, part of the ribosomal stalk of the 50S ribosomal subunit. The N-terminus interacts with L11 and the large rRNA to form the base of the stalk. The C-terminus forms an elongated spine to which L12 dimers bind in a sequential fashion forming a multimeric L10(L12)X complex.

In terms of biological role, forms part of the ribosomal stalk, playing a central role in the interaction of the ribosome with GTP-bound translation factors. This is Large ribosomal subunit protein uL10 from Thermus thermophilus (strain ATCC BAA-163 / DSM 7039 / HB27).